The following is an 880-amino-acid chain: MAQHEVSMPPKYDHRAVEAGRYEWWLKGKFFEATGDPNKRPFTIVIPPPNVTGKLHLGHAWDTTLQDIITRMKRMQGYDVLWLPGMDHAGIATQAKVEEKLRQQGLSRYDLGREKFLEETWKWKEEYAGHIRSQWAKLGLGLDYTRERFTLDEGLSKAVREVFVSLYRKGLIYRGEYIINWDPVTKTALSDIEVVYKEVKGALYHLRYPLADGSGCIEVATTRPETMLGDTAVAVHPDDERYKHLIGKMVKLPIVGREIPIIADEYVDMEFGSGAVKITPAHDPNDFEIGNRHNLPRILVMNEDGTMNENAMQYQGLDRFECRKQIVRDLQEQGVLFKIEEHVHSVGHSERSGAVVEPYLSTQWFVKMKPLAEAAIKLQQTDEKVQFVPDRFEKTYLHWLENIRDWCISRQLWWGHRIPAWYHKETGEIYVDHEPPKDIENWEQDPDVLDTWFSSALWPFSTMGWPDTESPDYKRYYPTDVLVTGYDIIFFWVSRMIFQGLEFTGKRPFKDVLIHGLVRDAQGRKMSKSLGNGVDPMDVIDQYGADALRYFLATGSSPGQDLRFSTEKVEATWNFANKIWNASRFALMNMGGMTYEELDLSGEKTVADHWILTRLNETIETVTKLAEKYEFGEVGRTLYNFIWDDLCDWYIEMAKLPLYGADEAAKKTTRSVLAYVLDNTMRLLHPFMPFITEEIWQNLPHEGESITVAPWPQVRPELSNEEAAEEMRLLVDIIRAVRSVRAEVNTPPSKPIALYIKVKDEQVRAALMKNRAYLERFCNPSELLIDTNVPAPDKAMTAVVTGAELIMPLEGLINIEEEIKRLEKELDKWNKEVERVEKKLANEGFLAKAPAHVVEEERRKRQDYIEKREAVKARLAELKR.

The 'HIGH' region motif lies at 49–59 (PNVTGKLHLGH). Positions 525–529 (KMSKS) match the 'KMSKS' region motif. Lys528 is a binding site for ATP. The stretch at 809-880 (LEGLINIEEE…VKARLAELKR (72 aa)) forms a coiled coil.

It belongs to the class-I aminoacyl-tRNA synthetase family. ValS type 1 subfamily. In terms of assembly, monomer.

It is found in the cytoplasm. The catalysed reaction is tRNA(Val) + L-valine + ATP = L-valyl-tRNA(Val) + AMP + diphosphate. In terms of biological role, catalyzes the attachment of valine to tRNA(Val). As ValRS can inadvertently accommodate and process structurally similar amino acids such as threonine, to avoid such errors, it has a 'posttransfer' editing activity that hydrolyzes mischarged Thr-tRNA(Val) in a tRNA-dependent manner. This is Valine--tRNA ligase from Geobacillus kaustophilus (strain HTA426).